The chain runs to 241 residues: Terpene cyclase pyr4 (241 aa).

Helical transmembrane passes span 20 to 40 (IADW…LAMI), 49 to 69 (YGMA…YSVI), 79 to 99 (AVLT…IKFA), 113 to 133 (LPWI…ALAA), 141 to 161 (ANWG…CQLM), 168 to 188 (GASY…GIFL), and 206 to 226 (FVTW…TFLW).

Belongs to the paxB family.

Its subcellular location is the membrane. The catalysed reaction is 2-oxo-3-[(8S)-epoxy-(2E,6E)-farnesyl]-6-(pyridin-3-yl)-2H-pyran-4-olate + H(+) = deacetylpyripyropene E. It functions in the pathway secondary metabolite biosynthesis; terpenoid biosynthesis. Its function is as follows. Terpene cyclase; part of the gene cluster that mediates the biosynthesis of pyripyropene A, a specific human acyl-coenzyme A:cholesterol acyltransferase 2 inhibitor. The first step of the pathway is the synthesis of nicotinyl-CoA from nicotinic acid by the nicotinic acid-CoA ligase pyr1. Nicotinyl-CoA is then a substrate of polyketide synthase pyr2 to produce 4-hydroxy-6-(3-pyridinyl)-2H-pyran-2-one (HPPO) which is further prenylated by the polyprenyl transferase pyr6 to yield farnesyl-HPPO. The next steps consist of an epoxidation of farnesyl-HPPO to epoxyfarnesyl-HPPO by FAD-dependent monooxygenase pyr5 and a cyclization of the terpenoid portion by the terpene cyclase pyr4 to yield deacetyl-pyripyropene E. The 2 cytochrome P450 monooxygenases pyr3 and pyr9, and the 2 acetyltransferases pyr7 and pyr8 are involved in the conversion of deacetyl-pyripyropene E into pyripyropene A through several cycles of oxidation and acetylation steps. Pyr7 acetylates deacetyl-pyripyropene E to pyripyropene E which is oxidized to 11-deacetyl-pyripyropene O by pyr3, which is in turn acetylated into pyripyropene O by pyr8. Pyripyropene O is then oxidized to deacetyl-pyripyropene A by pyr9. Deacetyl-pyripyropene A is finally acetylated to pyripyropene A by pyr8. The sequence is that of Terpene cyclase pyr4 from Aspergillus fumigatus (strain ATCC MYA-4609 / CBS 101355 / FGSC A1100 / Af293) (Neosartorya fumigata).